We begin with the raw amino-acid sequence, 344 residues long: tRNA N6-adenosine threonylcarbamoyltransferase (344 aa).

The Fe cation site is built by His-119 and His-123. Residues Val-141–Gly-145, Asp-174, Gly-187, Asp-191, and Asn-280 each bind substrate. Asp-310 provides a ligand contact to Fe cation.

This sequence belongs to the KAE1 / TsaD family. Fe(2+) is required as a cofactor.

Its subcellular location is the cytoplasm. The catalysed reaction is L-threonylcarbamoyladenylate + adenosine(37) in tRNA = N(6)-L-threonylcarbamoyladenosine(37) in tRNA + AMP + H(+). Functionally, required for the formation of a threonylcarbamoyl group on adenosine at position 37 (t(6)A37) in tRNAs that read codons beginning with adenine. Is involved in the transfer of the threonylcarbamoyl moiety of threonylcarbamoyl-AMP (TC-AMP) to the N6 group of A37, together with TsaE and TsaB. TsaD likely plays a direct catalytic role in this reaction. The sequence is that of tRNA N6-adenosine threonylcarbamoyltransferase from Listeria welshimeri serovar 6b (strain ATCC 35897 / DSM 20650 / CCUG 15529 / CIP 8149 / NCTC 11857 / SLCC 5334 / V8).